A 98-amino-acid polypeptide reads, in one-letter code: Prostate and testis expressed protein 3 (98 aa).

An N-terminal signal peptide occupies residues 1 to 20 (MNKHFLFLFLLYCLIVAVTS). The UPAR/Ly6 domain maps to 21-97 (LQCITCHLRT…CCNYNYCNFK (77 aa)). 4 disulfides stabilise this stretch: Cys23/Cys50, Cys26/Cys35, Cys42/Cys68, and Cys72/Cys88.

Belongs to the PATE family. As to expression, specifically expressed in prostate and testis.

The protein localises to the secreted. The chain is Prostate and testis expressed protein 3 (PATE3) from Homo sapiens (Human).